We begin with the raw amino-acid sequence, 277 residues long: Formamidopyrimidine-DNA glycosylase (277 aa).

The Schiff-base intermediate with DNA role is filled by P2. E3 functions as the Proton donor in the catalytic mechanism. K60 functions as the Proton donor; for beta-elimination activity in the catalytic mechanism. The DNA site is built by H94, R113, and R156. An FPG-type zinc finger spans residues 241–275; sequence KVYNREGLPCPHCGKPIQRIKVAGRSSYYCSSCQK. The active-site Proton donor; for delta-elimination activity is the R265.

It belongs to the FPG family. In terms of assembly, monomer. It depends on Zn(2+) as a cofactor.

The catalysed reaction is Hydrolysis of DNA containing ring-opened 7-methylguanine residues, releasing 2,6-diamino-4-hydroxy-5-(N-methyl)formamidopyrimidine.. It carries out the reaction 2'-deoxyribonucleotide-(2'-deoxyribose 5'-phosphate)-2'-deoxyribonucleotide-DNA = a 3'-end 2'-deoxyribonucleotide-(2,3-dehydro-2,3-deoxyribose 5'-phosphate)-DNA + a 5'-end 5'-phospho-2'-deoxyribonucleoside-DNA + H(+). Functionally, involved in base excision repair of DNA damaged by oxidation or by mutagenic agents. Acts as a DNA glycosylase that recognizes and removes damaged bases. Has a preference for oxidized purines, such as 7,8-dihydro-8-oxoguanine (8-oxoG). Has AP (apurinic/apyrimidinic) lyase activity and introduces nicks in the DNA strand. Cleaves the DNA backbone by beta-delta elimination to generate a single-strand break at the site of the removed base with both 3'- and 5'-phosphates. The sequence is that of Formamidopyrimidine-DNA glycosylase from Desulforamulus reducens (strain ATCC BAA-1160 / DSM 100696 / MI-1) (Desulfotomaculum reducens).